We begin with the raw amino-acid sequence, 263 residues long: Large ribosomal subunit protein uL29m (263 aa).

2 disordered regions span residues 51-92 (ARVT…EELP) and 208-263 (PEID…APRV). A compositionally biased stretch (basic and acidic residues) spans 53 to 66 (VTRDNSKQRGESAL). A compositionally biased stretch (polar residues) spans 214 to 223 (NPENPYTPST). The segment covering 233–245 (GAEASETQSTTTE) has biased composition (low complexity). The span at 246–257 (IDPTTIPSSKSQ) shows a compositional bias: polar residues.

This sequence belongs to the universal ribosomal protein uL29 family. As to quaternary structure, component of the mitochondrial large ribosomal subunit (mt-LSU). Mature N.crassa 74S mitochondrial ribosomes consist of a small (37S) and a large (54S) subunit. The 37S small subunit contains a 16S ribosomal RNA (16S mt-rRNA) and 32 different proteins. The 54S large subunit contains a 23S rRNA (23S mt-rRNA) and 42 different proteins.

The protein resides in the mitochondrion. In terms of biological role, component of the mitochondrial ribosome (mitoribosome), a dedicated translation machinery responsible for the synthesis of mitochondrial genome-encoded proteins, including at least some of the essential transmembrane subunits of the mitochondrial respiratory chain. The mitoribosomes are attached to the mitochondrial inner membrane and translation products are cotranslationally integrated into the membrane. This chain is Large ribosomal subunit protein uL29m (mrpl4), found in Neurospora crassa (strain ATCC 24698 / 74-OR23-1A / CBS 708.71 / DSM 1257 / FGSC 987).